The chain runs to 429 residues: MEKLLIEGGRALNGTIRVSGAKNSAVALIPTTILADTPVTIGGVPNISDVKMLGDLLEEIGGKVTYGQEEEMVVDPSNMVAMPLPNGKVKKLRASYYLMGAMLGRFKKAVIGLPGGCHLGPRPIDQHIKGFEALGAHVTNEQGAIYLRADELRGARIYLDVVSVGATINIMLAAVRAKGRTVIENAAKEPEIIDVATLLTSMGARIKGAGTDVIRIDGVDSLHGCHHTIIPDRIEAGTYMILGAASGGEVTVDNVIPQHLESVTAKLREAGVQVETNDDQITVNGNRKLKVVDIKTLVYPGFPTDLQQPFTTLLTKAHGTGVVTDTIYGARFKHIDELRRMNAQIKVEGRSAIVTGPVLLQGAKVKASDLRAGAALVIAGLMADGITEVTGLEHIDRGYENIVDKLKGLGANIWREQMTKQEIEEMKNA.

Residue 22-23 (KN) coordinates phosphoenolpyruvate. Position 93 (R93) interacts with UDP-N-acetyl-alpha-D-glucosamine. The active-site Proton donor is C117. Residue C117 is modified to 2-(S-cysteinyl)pyruvic acid O-phosphothioketal. Residues 122–126 (RPIDQ), D305, and I327 each bind UDP-N-acetyl-alpha-D-glucosamine.

This sequence belongs to the EPSP synthase family. MurA subfamily.

The protein localises to the cytoplasm. The catalysed reaction is phosphoenolpyruvate + UDP-N-acetyl-alpha-D-glucosamine = UDP-N-acetyl-3-O-(1-carboxyvinyl)-alpha-D-glucosamine + phosphate. It participates in cell wall biogenesis; peptidoglycan biosynthesis. Its function is as follows. Cell wall formation. Adds enolpyruvyl to UDP-N-acetylglucosamine. The sequence is that of UDP-N-acetylglucosamine 1-carboxyvinyltransferase 2 from Bacillus cereus (strain ATCC 14579 / DSM 31 / CCUG 7414 / JCM 2152 / NBRC 15305 / NCIMB 9373 / NCTC 2599 / NRRL B-3711).